Consider the following 132-residue polypeptide: Small ribosomal subunit protein uS8 (132 aa).

This sequence belongs to the universal ribosomal protein uS8 family. In terms of assembly, part of the 30S ribosomal subunit. Contacts proteins S5 and S12.

Its function is as follows. One of the primary rRNA binding proteins, it binds directly to 16S rRNA central domain where it helps coordinate assembly of the platform of the 30S subunit. The polypeptide is Small ribosomal subunit protein uS8 (Christiangramia forsetii (strain DSM 17595 / CGMCC 1.15422 / KT0803) (Gramella forsetii)).